A 517-amino-acid polypeptide reads, in one-letter code: Cytochrome P450 monooxygenase bsc11 (517 aa).

Residues 16-33 (ALPLTCTGLIIIFAFYLS) traverse the membrane as a helical segment. N-linked (GlcNAc...) asparagine glycosylation is present at N204. Heme is bound at residue C448.

It belongs to the cytochrome P450 family. It depends on heme as a cofactor.

It is found in the membrane. It participates in mycotoxin biosynthesis. Functionally, cytochrome P450 monooxygenase; part of the gene cluster that mediates the biosynthesis of the diterpene glucoside brassicicene C. In the first step of the brassicicene C biosynthesis, the bifunctional diterpene synthase bsc8 that possesses both prenyl transferase and terpene cyclase activity, converts isopentenyl diphosphate and dimethylallyl diphosphate into geranylgeranyl diphosphate (GGDP) that is further converted into fusicocca-2,10(14)-diene, the first precursor for brassicicene C. Fusicocca-2,10(14)-diene is then substrate of cytochrome P450 monooxygenase bsc1 for hydroxylation at the C-8 position. Oxidation at C-16 position to aldehyde is then catalyzed by the cytochrome P450 monooyxygenase bsc7, yielding fusicocca-2,10(14)-diene-8-beta,16-diol. Follows the isomerization of the double bond and reduction of aldehyde to alcohol catalyzed by the short-chain dehydrogenase/reductase bsc3 to yield the diol compound fusicocca-1,10(14)-diene-8 beta,16-diol. The next step is the oxidation at the C-3 position of fusicocca-2,10(14)-diene-8-beta,16-diol catalyzed by the alpha-ketoglutarate dependent dioxygenase bsc9, to produce a triol compound. Methylation of the hydroxy group at position 16 is performed by the methyltransferase bsc6. 16-O-methylation is followed by oxidation at the C-13 position to ketone and an alkyl shift of the methyl group leads to brassicicene C. Although the probable acetyltransferase bsc4 is included in the gene cluster, no acetylation reactions are necessary for brassicicene C biosynthesis. However, the fact that brassicicene E, which is a structurally related compound having an acetoxy group at position 12, was previously isolated from another strain of A.brassicicola suggests that the ATCC 96836 strain might also produce a small amount of brassicicene E. The chain is Cytochrome P450 monooxygenase bsc11 from Alternaria brassicicola (Dark leaf spot agent).